Reading from the N-terminus, the 459-residue chain is Ribulose bisphosphate carboxylase (459 aa).

Asparagine 111 is a binding site for substrate. The active-site Proton acceptor is the lysine 166. Lysine 168 serves as a coordination point for substrate. Positions 191, 193, and 194 each coordinate Mg(2+). Lysine 191 is modified (N6-carboxylysine). Histidine 287 (proton acceptor) is an active-site residue. Residues arginine 288, histidine 321, and serine 368 each coordinate substrate.

This sequence belongs to the RuBisCO large chain family. Type II subfamily. As to quaternary structure, homodimer. Mg(2+) is required as a cofactor.

It carries out the reaction 2 (2R)-3-phosphoglycerate + 2 H(+) = D-ribulose 1,5-bisphosphate + CO2 + H2O. It catalyses the reaction D-ribulose 1,5-bisphosphate + O2 = 2-phosphoglycolate + (2R)-3-phosphoglycerate + 2 H(+). Functionally, ruBisCO catalyzes two reactions: the carboxylation of D-ribulose 1,5-bisphosphate, the primary event in carbon dioxide fixation, as well as the oxidative fragmentation of the pentose substrate. Both reactions occur simultaneously and in competition at the same active site. This is Ribulose bisphosphate carboxylase from Cereibacter sphaeroides (Rhodobacter sphaeroides).